Here is a 121-residue protein sequence, read N- to C-terminus: Large ribosomal subunit protein bL20 (121 aa).

This sequence belongs to the bacterial ribosomal protein bL20 family.

Its function is as follows. Binds directly to 23S ribosomal RNA and is necessary for the in vitro assembly process of the 50S ribosomal subunit. It is not involved in the protein synthesizing functions of that subunit. This is Large ribosomal subunit protein bL20 from Ruegeria sp. (strain TM1040) (Silicibacter sp.).